Consider the following 199-residue polypeptide: Probable thymidylate kinase (199 aa).

9–16 serves as a coordination point for ATP; sequence GIDGCGKT.

It belongs to the thymidylate kinase family.

It carries out the reaction dTMP + ATP = dTDP + ADP. This chain is Probable thymidylate kinase, found in Methanococcus maripaludis (strain DSM 14266 / JCM 13030 / NBRC 101832 / S2 / LL).